Consider the following 530-residue polypeptide: UDP-glucuronosyltransferase 2B17 (530 aa).

The signal sequence occupies residues 1-23 (MPGKWISALLLLQISCCFQSGNC). A helical transmembrane segment spans residues 494–510 (VIGFLLTCSAVIAVLTV).

Belongs to the UDP-glycosyltransferase family.

It is found in the endoplasmic reticulum membrane. It carries out the reaction glucuronate acceptor + UDP-alpha-D-glucuronate = acceptor beta-D-glucuronoside + UDP + H(+). The catalysed reaction is 17alpha-estradiol + UDP-alpha-D-glucuronate = 17alpha-estradiol 3-O-(beta-D-glucuronate) + UDP + H(+). It catalyses the reaction 17alpha-estradiol + UDP-alpha-D-glucuronate = 17alpha-estradiol 17-O-(beta-D-glucuronate) + UDP + H(+). The enzyme catalyses 17beta-estradiol + UDP-alpha-D-glucuronate = 17beta-estradiol 17-O-(beta-D-glucuronate) + UDP + H(+). It carries out the reaction 17beta-hydroxy-5alpha-androstan-3-one + UDP-alpha-D-glucuronate = 5alpha-dihydrotestosterone 17-O-(beta-D-glucuronate) + UDP + H(+). The catalysed reaction is testosterone + UDP-alpha-D-glucuronate = testosterone 17-O-(beta-D-glucuronate) + UDP + H(+). UDP-glucuronosyltransferase (UGT) that catalyzes phase II biotransformation reactions in which lipophilic substrates are conjugated with glucuronic acid to increase the metabolite's water solubility, thereby facilitating excretion into either the urine or bile. Catalyzes the glucuronidation of endogenous steroid hormones such as androgens (epitestosterone, androsterone) and estrogens (estradiol, epiestradiol). This is UDP-glucuronosyltransferase 2B17 from Rattus norvegicus (Rat).